Here is an 817-residue protein sequence, read N- to C-terminus: Collagen-like protein 4 (817 aa).

Collagen-like domains are found at residues 83–142 (GDTG…KGQD), 145–264 (GSKG…KGDD), and 268–327 (GIQG…KGLK). 3 disordered regions span residues 87 to 107 (NKGE…GDNG), 120 to 458 (FNGS…DKGD), and 479 to 543 (IIGD…KGDI). Asn-106 and Asn-121 each carry an N-linked (GlcNAc...) asparagine; by host glycan. 2 stretches are compositionally biased toward basic and acidic residues: residues 126-141 (IKGD…DKGQ) and 149-161 (QKGE…DDGI). N-linked (GlcNAc...) asparagine; by host glycosylation is present at Asn-183. Basic and acidic residues-rich tracts occupy residues 212–224 (IKGD…EDGI) and 233–245 (SKGE…DDGT). The span at 246–260 (KGITGLKGTKGNSGS) shows a compositional bias: low complexity. Over residues 294–341 (KGSDGDKGNKGLDGIKGDLGDDGIKGDKGIKGLKGDTGNSDKGDKGSK) the composition is skewed to basic and acidic residues. 2 N-linked (GlcNAc...) asparagine; by host glycosylation sites follow: Asn-345 and Asn-360. Collagen-like domains lie at 352–411 (GDKG…KGLV) and 430–489 (GDKG…KGIK). 3 stretches are compositionally biased toward basic and acidic residues: residues 354 to 368 (KGSK…ESGD), 377 to 390 (SKGD…KGDL), and 428 to 458 (SKGD…DKGD). Residues 480 to 494 (IGDNGSKGIKGSSNN) show a composition bias toward low complexity. N-linked (GlcNAc...) asparagine; by host glycosylation occurs at Asn-483. Composition is skewed to basic and acidic residues over residues 495-504 (KGDKGDKGNT), 515-525 (IKGDKGIKGSK), and 533-543 (EKGEKGTKGDI). The Collagen-like 6 domain occupies 512–570 (TKGIKGDKGIKGSKGDLGSVGEKGEKGTKGDIGTKGETGLKGIIGDKGELGSKGIKGLS). Residues Asn-709, Asn-712, and Asn-715 are each glycosylated (N-linked (GlcNAc...) asparagine; by host). Gly residues predominate over residues 757–771 (GGGGASAFGNGGRGG). Residues 757–804 (GGGGASAFGNGGRGGNTTQAATKGEYGSGGGGGSEFSPSGSTNGGDGG) are disordered. Residue Asn-772 is glycosylated (N-linked (GlcNAc...) asparagine; by host).

Post-translationally, may be hydroxylated on lysine by the viral-encoded procollagen-lysine,2-oxoglutarate 5-dioxygenase.

The protein resides in the virion. May participate in the formation of a layer of cross-linked glycosylated fibrils at the viral surface thus giving it a hairy-like appearance. This is Collagen-like protein 4 from Acanthamoeba polyphaga (Amoeba).